Reading from the N-terminus, the 401-residue chain is MTQITNVSLRRILDSRGNPTVEADVLTQSGGFGRAAAPSGASTGEYEAIELDPAEAIASARDHVAPRLIDTVHAGNQREVDAALHAADGTDNFSQIGANSAVAISMAAAKAGADVLGAPVYQHLGGTFRGESFPTPLGNVVGGGEHAKEATHIQEFLSAPIGAPNVSEAVFANAAVHARVSEILDERGIPAAKGDEGAWAPPISDAEAFSLVNDAVADVEDDLGFEIRFGLDMAAAELYDDDVGGYVYGDEVKSTTEQVEYVAEMIAEYNLVYVEDPLDENDYDGFATLTERVGDQTLICGDDLFVTSVERLQTGIDADAANSILIKPNQIGTLTDAFDAIELAREHGYETVVSHRSGETEDVTIAHLAVATDAGFIKTGTVQGERTAKLNELIRIAEDAV.

A (2R)-2-phosphoglycerate-binding site is contributed by Gln-154. Residue Glu-196 is the Proton donor of the active site. Residues Asp-232, Glu-275, and Asp-302 each contribute to the Mg(2+) site. Lys-327, Arg-356, Ser-357, and Lys-378 together coordinate (2R)-2-phosphoglycerate. Catalysis depends on Lys-327, which acts as the Proton acceptor.

It belongs to the enolase family. Mg(2+) is required as a cofactor.

Its subcellular location is the cytoplasm. It is found in the secreted. The protein localises to the cell surface. It catalyses the reaction (2R)-2-phosphoglycerate = phosphoenolpyruvate + H2O. The protein operates within carbohydrate degradation; glycolysis; pyruvate from D-glyceraldehyde 3-phosphate: step 4/5. Functionally, catalyzes the reversible conversion of 2-phosphoglycerate (2-PG) into phosphoenolpyruvate (PEP). It is essential for the degradation of carbohydrates via glycolysis. The protein is Enolase of Haloquadratum walsbyi (strain DSM 16790 / HBSQ001).